A 186-amino-acid polypeptide reads, in one-letter code: Lipid A acyltransferase PagP (186 aa).

An N-terminal signal peptide occupies residues 1-19; sequence MKRLISCLTIICALNRSAA. Residues His-60, Asp-103, and Ser-104 contribute to the active site.

The protein belongs to the lipid A palmitoyltransferase family. In terms of assembly, homodimer.

Its subcellular location is the cell outer membrane. It catalyses the reaction a lipid A + a 1,2-diacyl-sn-glycero-3-phosphocholine = a hepta-acyl lipid A + a 2-acyl-sn-glycero-3-phosphocholine. It carries out the reaction a lipid IVA + a 1,2-diacyl-sn-glycero-3-phosphocholine = a lipid IVB + a 2-acyl-sn-glycero-3-phosphocholine. The catalysed reaction is a lipid IIA + a 1,2-diacyl-sn-glycero-3-phosphocholine = a lipid IIB + a 2-acyl-sn-glycero-3-phosphocholine. Functionally, transfers a fatty acid residue from the sn-1 position of a phospholipid to the N-linked hydroxyfatty acid chain on the proximal unit of lipid A or its precursors. Confers resistance to cationic antimicrobial peptides (CAMPs). Promotes the ability of L.pneumophila to replicate and/or survive in macrophages. Important for ability to kill macrophages and to promote the virulence. The protein is Lipid A acyltransferase PagP of Legionella pneumophila.